The sequence spans 202 residues: B-cell CLL/lymphoma 7 protein family member B (202 aa).

The disordered stretch occupies residues 53-202 (DSKEKEKSKS…PVVPQTTSES (150 aa)). Polar residues predominate over residues 90–99 (ENSNQSSVSD). Positions 107–123 (SSTNSSPSPQQSESLSP) are enriched in low complexity. 7 positions are modified to phosphoserine: serine 114, serine 118, serine 120, serine 122, serine 127, serine 148, and serine 152.

This sequence belongs to the BCL7 family.

In terms of biological role, positive regulator of apoptosis. Plays a role in the Wnt signaling pathway, negatively regulating the expression of Wnt signaling components CTNNB1 and HMGA1. Involved in cell cycle progression, maintenance of the nuclear structure and stem cell differentiation. May play a role in lung tumor development or progression. This chain is B-cell CLL/lymphoma 7 protein family member B (Bcl7b), found in Mus musculus (Mouse).